The following is a 289-amino-acid chain: 4-hydroxy-tetrahydrodipicolinate synthase (289 aa).

Threonine 46 contributes to the pyruvate binding site. The Proton donor/acceptor role is filled by tyrosine 134. Catalysis depends on lysine 162, which acts as the Schiff-base intermediate with substrate. Valine 204 contacts pyruvate.

It belongs to the DapA family. In terms of assembly, homotetramer; dimer of dimers.

Its subcellular location is the cytoplasm. The catalysed reaction is L-aspartate 4-semialdehyde + pyruvate = (2S,4S)-4-hydroxy-2,3,4,5-tetrahydrodipicolinate + H2O + H(+). It functions in the pathway amino-acid biosynthesis; L-lysine biosynthesis via DAP pathway; (S)-tetrahydrodipicolinate from L-aspartate: step 3/4. Its function is as follows. Catalyzes the condensation of (S)-aspartate-beta-semialdehyde [(S)-ASA] and pyruvate to 4-hydroxy-tetrahydrodipicolinate (HTPA). The protein is 4-hydroxy-tetrahydrodipicolinate synthase of Bacillus velezensis (strain DSM 23117 / BGSC 10A6 / LMG 26770 / FZB42) (Bacillus amyloliquefaciens subsp. plantarum).